Here is a 241-residue protein sequence, read N- to C-terminus: Sugar fermentation stimulation protein homolog (241 aa).

This sequence belongs to the SfsA family.

The protein is Sugar fermentation stimulation protein homolog of Nostoc sp. (strain PCC 7120 / SAG 25.82 / UTEX 2576).